A 513-amino-acid chain; its full sequence is Histidine ammonia-lyase (513 aa).

A cross-link (5-imidazolinone (Ala-Gly)) is located at residues 143–145 (ASG). S144 carries the 2,3-didehydroalanine (Ser) modification.

It belongs to the PAL/histidase family. Post-translationally, contains an active site 4-methylidene-imidazol-5-one (MIO), which is formed autocatalytically by cyclization and dehydration of residues Ala-Ser-Gly.

It is found in the cytoplasm. The enzyme catalyses L-histidine = trans-urocanate + NH4(+). It functions in the pathway amino-acid degradation; L-histidine degradation into L-glutamate; N-formimidoyl-L-glutamate from L-histidine: step 1/3. In Xanthomonas campestris pv. campestris (strain B100), this protein is Histidine ammonia-lyase.